Reading from the N-terminus, the 512-residue chain is 2-isopropylmalate synthase (512 aa).

The region spanning 5 to 268 (LIIFDTTLRD…DVGIDTQHIV (264 aa)) is the Pyruvate carboxyltransferase domain. Aspartate 14, histidine 202, histidine 204, and asparagine 239 together coordinate Mn(2+). Residues 394-512 (GFVSLAQHSE…SKAERVAAQG (119 aa)) form a regulatory domain region.

Belongs to the alpha-IPM synthase/homocitrate synthase family. LeuA type 1 subfamily. As to quaternary structure, homodimer. It depends on Mn(2+) as a cofactor.

The protein localises to the cytoplasm. The catalysed reaction is 3-methyl-2-oxobutanoate + acetyl-CoA + H2O = (2S)-2-isopropylmalate + CoA + H(+). It participates in amino-acid biosynthesis; L-leucine biosynthesis; L-leucine from 3-methyl-2-oxobutanoate: step 1/4. In terms of biological role, catalyzes the condensation of the acetyl group of acetyl-CoA with 3-methyl-2-oxobutanoate (2-ketoisovalerate) to form 3-carboxy-3-hydroxy-4-methylpentanoate (2-isopropylmalate). This chain is 2-isopropylmalate synthase, found in Acidovorax ebreus (strain TPSY) (Diaphorobacter sp. (strain TPSY)).